Reading from the N-terminus, the 453-residue chain is Gamma-glutamylpolyamine synthetase GlnA2 (453 aa).

In terms of domain architecture, GS beta-grasp spans 15 to 100 (RDIRFVRLWF…MFCDILMPDG (86 aa)). The GS catalytic domain maps to 107-453 (PRYVLKRALA…FELRKSLPVL (347 aa)). Mg(2+) contacts are provided by Glu130 and Glu132. Glu182 lines the ATP pocket. Residues Glu187 and Glu194 each contribute to the Mg(2+) site. Position 239 (Gly239) interacts with L-glutamate. His243 contacts Mg(2+). 245-247 (HLS) contributes to the ATP binding site. 3 residues coordinate L-glutamate: Arg296, Glu310, and Arg322. ATP is bound by residues Arg322 and Arg327. Glu342 contributes to the Mg(2+) binding site. Arg344 lines the L-glutamate pocket.

Belongs to the glutamine synthetase family. Mg(2+) serves as cofactor.

It carries out the reaction putrescine + L-glutamate + ATP = gamma-L-glutamylputrescine + ADP + phosphate + H(+). The catalysed reaction is spermine + L-glutamate + ATP = gamma-L-glutamylspermine + ADP + phosphate + H(+). The enzyme catalyses spermidine + L-glutamate + ATP = gamma-L-glutamylspermidine + ADP + phosphate + H(+). It catalyses the reaction cadaverine + L-glutamate + ATP = gamma-L-glutamylcadaverine + ADP + phosphate + H(+). The protein operates within amine and polyamine degradation; putrescine degradation. It participates in amine and polyamine degradation; spermidine degradation. Its pathway is amine and polyamine degradation; spermine degradation. Its activity is regulated as follows. No effect on activity with glutamine synthetase (GS) inhibitor methionine sulfoximine (MSO). Involved in the catabolism of polyamines. Catalyzes the ATP-dependent gamma-glutamylation of polyamines. Substrates include putrescine, cadaverine, spermidine and spermine, with a preference for short-chain polyamine putrescine. No complementation of the L-glutamine auxotrophy of an E.coli glnA mutant. Together with GlnA3, enables survival of S.coelicolor under exposure to high local environmental polyamine concentrations, which is toxic to the cells. This Streptomyces coelicolor (strain ATCC BAA-471 / A3(2) / M145) protein is Gamma-glutamylpolyamine synthetase GlnA2.